A 158-amino-acid chain; its full sequence is Tryptophan-rich sensory protein (158 aa).

Transmembrane regions (helical) follow at residues 5–25, 44–65, 73–93, 97–119, and 124–144; these read WALF…GALL, WVFP…MRVA, ALAF…VFFG, MATA…WAFF, and WAGV…GLNF.

Belongs to the TspO/BZRP family. As to quaternary structure, homodimer.

It is found in the membrane. The protein resides in the cell inner membrane. Functionally, may play a role in the transmembrane transport of tetrapyrroles and similar compounds, and thereby contribute to the regulation of tetrapyrrole biosynthesis. Binds tetrapyrroles and promotes the photooxidative degradation of protoporphyrin IX. Binds protoporphyrin IX, hemin, and coproporphyrin III, but does not bind delta-aminolevulinic acid. Can bind bilirubin, curcumin, gossypol, retinoic acid, cholesterol and the benzodiazepine receptor agonist PK-11195 (in vitro). Plays a role in the response to low oxygen levels and in the regulation of the biosynthesis of photosynthetic pigments. This chain is Tryptophan-rich sensory protein, found in Cereibacter sphaeroides (Rhodobacter sphaeroides).